The primary structure comprises 59 residues: UPF0181 protein CKO_01169 (59 aa).

This sequence belongs to the UPF0181 family.

This is UPF0181 protein CKO_01169 from Citrobacter koseri (strain ATCC BAA-895 / CDC 4225-83 / SGSC4696).